A 424-amino-acid chain; its full sequence is Serine hydroxymethyltransferase 1 (424 aa).

(6S)-5,6,7,8-tetrahydrofolate contacts are provided by residues Leu-125 and 129–131 (GHL). An N6-(pyridoxal phosphate)lysine modification is found at Lys-234.

It belongs to the SHMT family. As to quaternary structure, homodimer. Pyridoxal 5'-phosphate is required as a cofactor.

The protein resides in the cytoplasm. The catalysed reaction is (6R)-5,10-methylene-5,6,7,8-tetrahydrofolate + glycine + H2O = (6S)-5,6,7,8-tetrahydrofolate + L-serine. Its pathway is one-carbon metabolism; tetrahydrofolate interconversion. It functions in the pathway amino-acid biosynthesis; glycine biosynthesis; glycine from L-serine: step 1/1. In terms of biological role, catalyzes the reversible interconversion of serine and glycine with tetrahydrofolate (THF) serving as the one-carbon carrier. This reaction serves as the major source of one-carbon groups required for the biosynthesis of purines, thymidylate, methionine, and other important biomolecules. Also exhibits THF-independent aldolase activity toward beta-hydroxyamino acids, producing glycine and aldehydes, via a retro-aldol mechanism. In Burkholderia lata (strain ATCC 17760 / DSM 23089 / LMG 22485 / NCIMB 9086 / R18194 / 383), this protein is Serine hydroxymethyltransferase 1.